A 207-amino-acid chain; its full sequence is MLFAQLNEYMAEVGLDASEQQKKQLVDFVGMLNKWNKAFNLTSVRDPEQMLIRHIMDSLVVSPHLKGSRFIDVGTGPGLPGIPLAILNPDKEFVLLDSLGKRIRFQKQVQFELGINNISSIESRVEAYQPEELFDGVLSRAFASIQDMLQWCHHLPKSDGCFYALKGQLSEDEMANMPQGFRVTDTIELVVPKLDEQRHLLRVVKQD.

Residues Gly-74, Leu-79, 125-126 (VE), and Arg-140 each bind S-adenosyl-L-methionine.

This sequence belongs to the methyltransferase superfamily. RNA methyltransferase RsmG family.

It is found in the cytoplasm. It carries out the reaction guanosine(527) in 16S rRNA + S-adenosyl-L-methionine = N(7)-methylguanosine(527) in 16S rRNA + S-adenosyl-L-homocysteine. Functionally, specifically methylates the N7 position of guanine in position 527 of 16S rRNA. This Shewanella piezotolerans (strain WP3 / JCM 13877) protein is Ribosomal RNA small subunit methyltransferase G.